The following is a 655-amino-acid chain: Forkhead box protein O1 (655 aa).

Disordered regions lie at residues 1-63 and 116-158; these read MAEA…SASA and GCLH…SRRN. The residue at position 24 (T24) is a Phosphothreonine; by PKB/AKT1 or PKB/AKT2 and SGK1. A compositionally biased stretch (low complexity) spans 33-63; it reads SQSNSATSSPAPSGSAAANPDAAAGLPSASA. Residues 120–141 show a composition bias toward pro residues; that stretch reads PAPPQPPPPGPLSQHPPVPPAA. Residues 159–235 constitute a DNA-binding region (fork-head); the sequence is AWGNLSYADL…VQNEGTGKSS (77 aa). 2 DNA-binding regions span residues 211–218 and 234–237; these read NSIRHNLS and SSWW. Residues S212, S218, S234, and S235 each carry the phosphoserine; by STK4/MST1 modification. The segment at 234 to 344 is disordered; the sequence is SSWWMLNPEG…QDDLGEGDVH (111 aa). An N6-acetyllysine mark is found at K245 and K248. Position 249 is a phosphoserine; by CDK1 (S249). Omega-N-methylarginine; by PRMT1 is present on residues R251 and R253. A Nuclear localization signal motif is present at residues 251-253; the sequence is RRR. A Phosphoserine; by PKB/AKT1 and SGK1 modification is found at S256. N6-acetyllysine is present on residues K262, K265, and K274. The span at 264-275 shows a compositional bias: basic residues; sequence AKSRSRAAKKKA. A sufficient for interaction with NLK region spans residues 283 to 563; that stretch reads GAGDSPGSQF…RLTQVKTPVQ (281 aa). Phosphoserine occurs at positions 287 and 298. The span at 309-326 shows a compositional bias: polar residues; that stretch reads NWSTFRPRTSSNASTISG. S319 carries the post-translational modification Phosphoserine; by PKB/AKT1. Position 322 is a phosphoserine; by CK1 and SGK1 (S322). At S325 the chain carries Phosphoserine; by CK1. A Phosphoserine; by DYRK1A modification is found at S329. Residue T333 is modified to Phosphothreonine. The tract at residues 363–459 is required for interaction with RUNX2; that stretch reads SEISNPENME…GGMSQYNCAP (97 aa). An N6-acetyllysine modification is found at K423. The Required for interaction with SIRT1 signature appears at 462-466; sequence LKELL. Over residues 507–534 the composition is skewed to polar residues; it reads YGSQASHNKMMNPSSHTHPGHAQQTSAV. The tract at residues 507–537 is disordered; the sequence is YGSQASHNKMMNPSSHTHPGHAQQTSAVNGR.

In terms of assembly, interacts with LRPPRC. Interacts with RUNX2; the interaction inhibits RUNX2 transcriptional activity and mediates the IGF1/insulin-dependent BGLAP expression in osteoblasts Interacts with PPP2R1A; the interaction regulates the dephosphorylation of FOXO1 at Thr-24 and Ser-256 leading to its nuclear import. Interacts (acetylated form) with PPARG. Interacts with XBP1 isoform 2; this interaction is direct and leads to FOXO1 ubiquitination and degradation via the proteasome pathway. Interacts with NLK. Interacts with SIRT1; the interaction results in the deacetylation of FOXO1 leading to activation of FOXO1-mediated transcription of genes involved in DNA repair and stress resistance. Binds to CDK1. Interacts with the 14-3-3 proteins, YWHAG and YWHAZ; the interactions require insulin-stimulated phosphorylation on Thr-24, promote nuclear exit and loss of transcriptional activity. Interacts with SKP2; the interaction ubiquitinates FOXO1 leading to its proteasomal degradation. The interaction requires the presence of KRIT1. Interacts (via the C-terminal half) with ATF4 (via its DNA-binding domain); the interaction occurs in osteoblasts, regulates glucose homeostasis via suppression of beta-cell proliferation and subsequent decrease in insulin production. Interacts with PRMT1; the interaction methylates FOXO1, prevents PKB/AKT1 phosphorylation and retains FOXO1 in the nucleus. Interacts with EP300 and CREBBP; the interactions acetylate FOXO1. Interacts with SIRT2; the interaction is disrupted in response to oxidative stress or serum deprivation, leading to increased level of acetylated FOXO1, which promotes stress-induced autophagy by stimulating E1-like activating enzyme ATG7. Interacts (acetylated form) with ATG7; the interaction is increased in response to oxidative stress or serum deprivation and promotes the autophagic process leading to cell death. Interacts (via the Fork-head domain) with CEBPA; the interaction increases when FOXO1 is deacetylated. Interacts with WDFY2. Forms a complex with WDFY2 and AKT1. Interacts with CRY1. Interacts with PPIA/CYPA; the interaction promotes FOXO1 dephosphorylation, nuclear accumulation and transcriptional activity. Interacts with TOX4; FOXO1 is required for full induction of TOX4-dependent activity and the interaction is inhibited by insulin. Interacts (when phosphorylated on Ser-256) with STUB1/CHIP. In terms of processing, phosphorylation by NLK promotes nuclear export and inhibits the transcriptional activity. In response to growth factors, phosphorylation on Thr-24, Ser-256 and Ser-322 by PKB/AKT1 promotes nuclear export and inactivation of transactivational activity. Phosphorylation on Thr-24 is required for binding 14-3-3 proteins. Phosphorylation of Ser-256 decreases DNA-binding activity and promotes the phosphorylation of Thr-24 and Ser-319, permitting phosphorylation of Ser-322 and Ser-325, probably by CDK1, leading to nuclear exclusion and loss of function. Stress signals, such as response to oxygen or nitric oxide, attenuate the PKB/AKT1-mediated phosphorylation leading to nuclear retention. Phosphorylation of Ser-329 is independent of IGF1 and leads to reduced function. Dephosphorylated on Thr-24 and Ser-256 by PP2A in beta-cells under oxidative stress leading to nuclear retention. Phosphorylation of Ser-249 by CDK1 disrupts binding of 14-3-3 proteins leading to nuclear accumulation and has no effect on DNA-binding nor transcriptional activity. Phosphorylation by STK4/MST1 on Ser-212, upon oxidative stress, inhibits binding to 14-3-3 proteins and nuclear export. PPIA/CYPA promotes its dephosphorylation on Ser-256. Ubiquitinated by SKP2. Ubiquitination leads to proteasomal degradation. Ubiquitinated by STUB1/CHIP; when Ser-256 is phosphorylated. Post-translationally, methylation inhibits AKT1-mediated phosphorylation at Ser-256 and is increased by oxidative stress. In terms of processing, acetylated. Acetylation at Lys-262, Lys-265 and Lys-274 are necessary for autophagic cell death induction. Deacetylated by SIRT2 in response to oxidative stress or serum deprivation, thereby negatively regulating FOXO1-mediated autophagic cell death. Once in the nucleus, acetylated by CREBBP/EP300. Acetylation diminishes the interaction with target DNA and attenuates the transcriptional activity. It increases the phosphorylation at Ser-256. Deacetylation by SIRT1 results in reactivation of the transcriptional activity. Oxidative stress by hydrogen peroxide treatment appears to promote deacetylation and uncoupling of insulin-induced phosphorylation. By contrast, resveratrol acts independently of acetylation. Acetylated at Lys-423, promoting its localization to the nucleus and transcription factor activity. Deacetylation at Lys-423 by SIRT6, promotes its translocation into the cytoplasm, preventing its transcription factor activity. Deacetylation and subsequent inhibition by SIRT6 has different effects depending on cell types: it inhibits gluconeogenesis in hepatocytes, promotes glucose sensing in pancreatic beta-cells and regulates lipid catabolism in brown adipocytes. In terms of tissue distribution, expressed in umbilical endothelial cells (at protein level). Abundantly expressed in skeletal muscle and ovary, with lower expression in the heart, placenta, lung, liver, pancreas, spleen, testis and small intestine. Weakly expressed in the brain, thymus, prostate and mucosal lining of the colon.

It localises to the cytoplasm. The protein resides in the nucleus. Functionally, transcription factor that is the main target of insulin signaling and regulates metabolic homeostasis in response to oxidative stress. Binds to the insulin response element (IRE) with consensus sequence 5'-TT[G/A]TTTTG-3' and the related Daf-16 family binding element (DBE) with consensus sequence 5'-TT[G/A]TTTAC-3'. Activity suppressed by insulin. Main regulator of redox balance and osteoblast numbers and controls bone mass. Orchestrates the endocrine function of the skeleton in regulating glucose metabolism. Also acts as a key regulator of chondrogenic commitment of skeletal progenitor cells in response to lipid availability: when lipids levels are low, translocates to the nucleus and promotes expression of SOX9, which induces chondrogenic commitment and suppresses fatty acid oxidation. Acts synergistically with ATF4 to suppress osteocalcin/BGLAP activity, increasing glucose levels and triggering glucose intolerance and insulin insensitivity. Also suppresses the transcriptional activity of RUNX2, an upstream activator of osteocalcin/BGLAP. Acts as an inhibitor of glucose sensing in pancreatic beta cells by acting as a transcription repressor and suppressing expression of PDX1. In hepatocytes, promotes gluconeogenesis by acting together with PPARGC1A and CEBPA to activate the expression of genes such as IGFBP1, G6PC1 and PCK1. Also promotes gluconeogenesis by directly promoting expression of PPARGC1A and G6PC1. Important regulator of cell death acting downstream of CDK1, PKB/AKT1 and STK4/MST1. Promotes neural cell death. Mediates insulin action on adipose tissue. Regulates the expression of adipogenic genes such as PPARG during preadipocyte differentiation and, adipocyte size and adipose tissue-specific gene expression in response to excessive calorie intake. Regulates the transcriptional activity of GADD45A and repair of nitric oxide-damaged DNA in beta-cells. Required for the autophagic cell death induction in response to starvation or oxidative stress in a transcription-independent manner. Mediates the function of MLIP in cardiomyocytes hypertrophy and cardiac remodeling. Positive regulator of apoptosis in cardiac smooth muscle cells as a result of its transcriptional activation of pro-apoptotic genes. Regulates endothelial cell (EC) viability and apoptosis in a PPIA/CYPA-dependent manner via transcription of CCL2 and BCL2L11 which are involved in EC chemotaxis and apoptosis. This Homo sapiens (Human) protein is Forkhead box protein O1.